The following is a 217-amino-acid chain: Protein OPI10 homolog (217 aa).

The protein belongs to the OPI10 family.

This Dictyostelium discoideum (Social amoeba) protein is Protein OPI10 homolog.